The sequence spans 127 residues: Fluoride-specific ion channel FluC (127 aa).

4 helical membrane passes run 7–27 (LILI…MGLI), 37–57 (FGTL…MAMI), 69–89 (LFMI…SAEV), and 102–122 (LGIM…GVLI). The Na(+) site is built by G77 and T80.

The protein belongs to the fluoride channel Fluc/FEX (TC 1.A.43) family.

The protein localises to the cell inner membrane. It catalyses the reaction fluoride(in) = fluoride(out). Na(+) is not transported, but it plays an essential structural role and its presence is essential for fluoride channel function. Fluoride-specific ion channel. Important for reducing fluoride concentration in the cell, thus reducing its toxicity. In Mannheimia succiniciproducens (strain KCTC 0769BP / MBEL55E), this protein is Fluoride-specific ion channel FluC.